The chain runs to 59 residues: Prokaryotic ubiquitin-like protein UBact (59 aa).

Residues 1-59 (MEMTDPLRREEKKESSPDPKEESGPSRPDVSRPGRDSLLKRMKKVDPKQSEKYKQRTGQ) are disordered. At Gln59 the chain carries Deamidated glutamine. Gln59 participates in a covalent cross-link: Isoglutamyl lysine isopeptide (Gln-Lys) (interchain with K-? in acceptor proteins).

It belongs to the ubiquitin-like protein UBact family. In terms of processing, may be modified by deamidation of its C-terminal glutamine to glutamate by the adjacently encoded deamidase. This could be a prerequisite to the subsequent conjugation, as shown in the other prokaryotic ubiquitin-like protein Pup.

Functionally, may function as a protein modifier covalently attached to lysine residues of substrate proteins. This may serve to target the modified proteins for degradation by proteasomes. The protein is Prokaryotic ubiquitin-like protein UBact of Nitrospina gracilis (strain 3/211).